The chain runs to 101 residues: Small ribosomal subunit protein uS14 (101 aa).

Residues 1-20 (MAKISAVERNKKRERLTKRD) form a disordered region.

It belongs to the universal ribosomal protein uS14 family. Part of the 30S ribosomal subunit. Contacts proteins S3 and S10.

Binds 16S rRNA, required for the assembly of 30S particles and may also be responsible for determining the conformation of the 16S rRNA at the A site. This Rhodospirillum rubrum (strain ATCC 11170 / ATH 1.1.1 / DSM 467 / LMG 4362 / NCIMB 8255 / S1) protein is Small ribosomal subunit protein uS14.